A 24-amino-acid polypeptide reads, in one-letter code: Acidic phospholipase A2 4 (24 aa).

This sequence belongs to the phospholipase A2 family. Group II subfamily. Requires Ca(2+) as cofactor. As to expression, expressed by the venom gland.

The protein localises to the secreted. It carries out the reaction a 1,2-diacyl-sn-glycero-3-phosphocholine + H2O = a 1-acyl-sn-glycero-3-phosphocholine + a fatty acid + H(+). In terms of biological role, PLA2 catalyzes the calcium-dependent hydrolysis of the 2-acyl groups in 3-sn-phosphoglycerides. This chain is Acidic phospholipase A2 4, found in Trimeresurus stejnegeri (Chinese green tree viper).